A 975-amino-acid polypeptide reads, in one-letter code: Exocyst complex component 4 (975 aa).

Residue Ala2 is modified to N-acetylalanine. Lys9 carries the N6-acetyllysine modification. A Phosphoserine modification is found at Ser32. Residues 32-114 (STSDDVEDRE…HCKRDELRKL (83 aa)) are a coiled coil. A compositionally biased stretch (basic and acidic residues) spans 211–224 (RNKEKGKMSSHGKD). The disordered stretch occupies residues 211 to 230 (RNKEKGKMSSHGKDPSPGPL). Residue Ser226 is modified to Phosphoserine. Residue Thr238 is modified to Phosphothreonine. Ser469 is subject to Phosphoserine.

It belongs to the SEC8 family. The exocyst complex is composed of EXOC1, EXOC2, EXOC3, EXOC4, EXOC5, EXOC6, EXOC7 and EXOC8. Interacts with BIRC6/bruce. Interacts with MYRIP. Interacts with SH3BP1; required for the localization of both SH3BP1 and the exocyst to the leading edge of migrating cells. Interacts with SLC6A9. In terms of tissue distribution, expressed in the striatum (at protein level).

It localises to the midbody. It is found in the midbody ring. The protein resides in the cell projection. Its subcellular location is the cytoplasm. The protein localises to the cytoskeleton. It localises to the microtubule organizing center. It is found in the centrosome. Functionally, component of the exocyst complex involved in the docking of exocytic vesicles with fusion sites on the plasma membrane. The chain is Exocyst complex component 4 (Exoc4) from Mus musculus (Mouse).